Reading from the N-terminus, the 169-residue chain is Small ribosomal subunit protein uS5 (169 aa).

The 64-residue stretch at 14-77 folds into the S5 DRBM domain; it reads LQEKLVAVRR…EQARKNMRKV (64 aa).

This sequence belongs to the universal ribosomal protein uS5 family. Part of the 30S ribosomal subunit. Contacts proteins S4 and S8.

Functionally, with S4 and S12 plays an important role in translational accuracy. Its function is as follows. Located at the back of the 30S subunit body where it stabilizes the conformation of the head with respect to the body. The chain is Small ribosomal subunit protein uS5 from Methylococcus capsulatus (strain ATCC 33009 / NCIMB 11132 / Bath).